We begin with the raw amino-acid sequence, 251 residues long: Regulator of G-protein signaling 9-binding protein C (251 aa).

Over 1–230 (MPLQNVKVAD…NSKGCCSDGQ (230 aa)) the chain is Cytoplasmic. Coiled coils occupy residues 53-94 (LRDE…ELER) and 158-187 (ANKA…MKVN). The helical; Anchor for type IV membrane protein transmembrane segment at 231–250 (LIVSLLLCGTALVAITLYSI) threads the bilayer. A topological domain (extracellular) is located at residue leucine 251.

The protein belongs to the RGS7BP/RGS9BP family.

Its subcellular location is the membrane. Regulator of G protein-coupled receptor (GPCR) signaling. Probably acts by regulating the activity of some 'R7' family protein (RGS6, RGS7, RGS9 and/or RGS11). This Xenopus laevis (African clawed frog) protein is Regulator of G-protein signaling 9-binding protein C (rgs9bp-c).